Here is a 420-residue protein sequence, read N- to C-terminus: Adenylosuccinate synthetase (420 aa).

GTP contacts are provided by residues 11–17 (GDEGKGK) and 39–41 (GHT). The active-site Proton acceptor is Asp12. Residues Asp12 and Gly39 each coordinate Mg(2+). Residues 12–15 (DEGK), 37–40 (NAGH), Thr129, Arg143, Asn218, Thr233, and Arg297 contribute to the IMP site. The active-site Proton donor is the His40. Substrate is bound at residue 293-299 (VTTGRKR). Residues Arg299, 325-327 (KLD), and 407-409 (GTG) contribute to the GTP site.

The protein belongs to the adenylosuccinate synthetase family. Homodimer. Mg(2+) serves as cofactor.

It localises to the cytoplasm. It carries out the reaction IMP + L-aspartate + GTP = N(6)-(1,2-dicarboxyethyl)-AMP + GDP + phosphate + 2 H(+). It participates in purine metabolism; AMP biosynthesis via de novo pathway; AMP from IMP: step 1/2. Functionally, plays an important role in the de novo pathway and in the salvage pathway of purine nucleotide biosynthesis. Catalyzes the first committed step in the biosynthesis of AMP from IMP. The chain is Adenylosuccinate synthetase from Uncinocarpus reesii (strain UAMH 1704).